A 413-amino-acid polypeptide reads, in one-letter code: CinA-like protein (413 aa).

It belongs to the CinA family.

The chain is CinA-like protein from Desulfotalea psychrophila (strain LSv54 / DSM 12343).